Consider the following 175-residue polypeptide: Adenine phosphoribosyltransferase (175 aa).

It belongs to the purine/pyrimidine phosphoribosyltransferase family. In terms of assembly, homodimer.

It is found in the cytoplasm. It carries out the reaction AMP + diphosphate = 5-phospho-alpha-D-ribose 1-diphosphate + adenine. Its pathway is purine metabolism; AMP biosynthesis via salvage pathway; AMP from adenine: step 1/1. Functionally, catalyzes a salvage reaction resulting in the formation of AMP, that is energically less costly than de novo synthesis. This Parvibaculum lavamentivorans (strain DS-1 / DSM 13023 / NCIMB 13966) protein is Adenine phosphoribosyltransferase.